The chain runs to 97 residues: Cobalt transport protein CbiN (97 aa).

A run of 2 helical transmembrane segments spans residues V6–L26 and S68–Y88.

This sequence belongs to the CbiN family. Forms an energy-coupling factor (ECF) transporter complex composed of an ATP-binding protein (A component, CbiO), a transmembrane protein (T component, CbiQ) and 2 possible substrate-capture proteins (S components, CbiM and CbiN) of unknown stoichimetry.

Its subcellular location is the cell membrane. The protein operates within cofactor biosynthesis; adenosylcobalamin biosynthesis. In terms of biological role, part of the energy-coupling factor (ECF) transporter complex CbiMNOQ involved in cobalt import. This is Cobalt transport protein CbiN from Methanococcus maripaludis (strain C7 / ATCC BAA-1331).